A 264-amino-acid chain; its full sequence is Thymidylate synthase (264 aa).

A dUMP-binding site is contributed by R21. Position 51 (H51) interacts with (6R)-5,10-methylene-5,6,7,8-tetrahydrofolate. 126-127 (RR) lines the dUMP pocket. The active-site Nucleophile is the C146. DUMP contacts are provided by residues 166–169 (RSAD), N177, and 207–209 (HLY). D169 is a binding site for (6R)-5,10-methylene-5,6,7,8-tetrahydrofolate. Position 263 (A263) interacts with (6R)-5,10-methylene-5,6,7,8-tetrahydrofolate.

Belongs to the thymidylate synthase family. Bacterial-type ThyA subfamily. Homodimer.

Its subcellular location is the cytoplasm. It carries out the reaction dUMP + (6R)-5,10-methylene-5,6,7,8-tetrahydrofolate = 7,8-dihydrofolate + dTMP. The protein operates within pyrimidine metabolism; dTTP biosynthesis. In terms of biological role, catalyzes the reductive methylation of 2'-deoxyuridine-5'-monophosphate (dUMP) to 2'-deoxythymidine-5'-monophosphate (dTMP) while utilizing 5,10-methylenetetrahydrofolate (mTHF) as the methyl donor and reductant in the reaction, yielding dihydrofolate (DHF) as a by-product. This enzymatic reaction provides an intracellular de novo source of dTMP, an essential precursor for DNA biosynthesis. The polypeptide is Thymidylate synthase (Polynucleobacter asymbioticus (strain DSM 18221 / CIP 109841 / QLW-P1DMWA-1) (Polynucleobacter necessarius subsp. asymbioticus)).